We begin with the raw amino-acid sequence, 806 residues long: Ankyrin repeat, bromo and BTB domain-containing protein DDB_G0293800 (806 aa).

ANK repeat units lie at residues methionine 1–glutamine 30, serine 34–cysteine 63, arginine 67–cysteine 96, alanine 100–leucine 130, and glutamate 134–valine 163. Residues glycine 210–serine 228 are compositionally biased toward basic and acidic residues. Residues glycine 210–glutamine 231 form a disordered region. Residues serine 239 to glutamate 307 enclose the BTB domain. Disordered stretches follow at residues threonine 423–methionine 517 and glutamine 621–arginine 743. Composition is skewed to low complexity over residues alanine 426–serine 436 and threonine 443–serine 511. The Bromo domain maps to serine 516 to asparagine 622. Positions glutamate 626–isoleucine 641 are enriched in pro residues. Residues proline 642 to threonine 658 show a composition bias toward low complexity. Basic and acidic residues predominate over residues aspartate 666 to threonine 675. Polar residues predominate over residues asparagine 676–alanine 693. The span at serine 694–threonine 733 shows a compositional bias: low complexity. The region spanning serine 727–glutamate 806 is the NET domain.

This Dictyostelium discoideum (Social amoeba) protein is Ankyrin repeat, bromo and BTB domain-containing protein DDB_G0293800.